A 159-amino-acid polypeptide reads, in one-letter code: SsrA-binding protein (159 aa).

It belongs to the SmpB family.

It localises to the cytoplasm. Functionally, required for rescue of stalled ribosomes mediated by trans-translation. Binds to transfer-messenger RNA (tmRNA), required for stable association of tmRNA with ribosomes. tmRNA and SmpB together mimic tRNA shape, replacing the anticodon stem-loop with SmpB. tmRNA is encoded by the ssrA gene; the 2 termini fold to resemble tRNA(Ala) and it encodes a 'tag peptide', a short internal open reading frame. During trans-translation Ala-aminoacylated tmRNA acts like a tRNA, entering the A-site of stalled ribosomes, displacing the stalled mRNA. The ribosome then switches to translate the ORF on the tmRNA; the nascent peptide is terminated with the 'tag peptide' encoded by the tmRNA and targeted for degradation. The ribosome is freed to recommence translation, which seems to be the essential function of trans-translation. This chain is SsrA-binding protein, found in Mycobacteroides abscessus (strain ATCC 19977 / DSM 44196 / CCUG 20993 / CIP 104536 / JCM 13569 / NCTC 13031 / TMC 1543 / L948) (Mycobacterium abscessus).